Reading from the N-terminus, the 160-residue chain is Cytochrome b6-f complex subunit 4 (160 aa).

The next 3 membrane-spanning stretches (helical) occupy residues 36 to 56, 95 to 115, and 127 to 147; these read LLYT…GLAV, LLGI…PFIE, and PIAM…GVAA.

Belongs to the cytochrome b family. PetD subfamily. As to quaternary structure, the 4 large subunits of the cytochrome b6-f complex are cytochrome b6, subunit IV (17 kDa polypeptide, PetD), cytochrome f and the Rieske protein, while the 4 small subunits are PetG, PetL, PetM and PetN. The complex functions as a dimer.

Its subcellular location is the cellular thylakoid membrane. Component of the cytochrome b6-f complex, which mediates electron transfer between photosystem II (PSII) and photosystem I (PSI), cyclic electron flow around PSI, and state transitions. The chain is Cytochrome b6-f complex subunit 4 from Prochlorothrix hollandica.